The following is a 463-amino-acid chain: L-seryl-tRNA(Sec) selenium transferase (463 aa).

Lys295 carries the post-translational modification N6-(pyridoxal phosphate)lysine.

This sequence belongs to the SelA family. In terms of assembly, homodecamer; pentamer of dimers. Binds only one seryl-tRNA(Sec) per dimer. Pyridoxal 5'-phosphate serves as cofactor.

It is found in the cytoplasm. It catalyses the reaction L-seryl-tRNA(Sec) + selenophosphate + H(+) = L-selenocysteinyl-tRNA(Sec) + phosphate. Its pathway is aminoacyl-tRNA biosynthesis; selenocysteinyl-tRNA(Sec) biosynthesis; selenocysteinyl-tRNA(Sec) from L-seryl-tRNA(Sec) (bacterial route): step 1/1. Converts seryl-tRNA(Sec) to selenocysteinyl-tRNA(Sec) required for selenoprotein biosynthesis. The polypeptide is L-seryl-tRNA(Sec) selenium transferase (Salmonella schwarzengrund (strain CVM19633)).